We begin with the raw amino-acid sequence, 259 residues long: Type III pantothenate kinase (259 aa).

6 to 13 (DCGNTNTV) contributes to the ATP binding site. 107 to 110 (GPDR) contributes to the substrate binding site. Asp-109 acts as the Proton acceptor in catalysis. K(+) is bound at residue Asp-129. Position 132 (Thr-132) interacts with ATP. Thr-184 is a binding site for substrate.

This sequence belongs to the type III pantothenate kinase family. Homodimer. NH4(+) is required as a cofactor. The cofactor is K(+).

The protein localises to the cytoplasm. The enzyme catalyses (R)-pantothenate + ATP = (R)-4'-phosphopantothenate + ADP + H(+). The protein operates within cofactor biosynthesis; coenzyme A biosynthesis; CoA from (R)-pantothenate: step 1/5. Its function is as follows. Catalyzes the phosphorylation of pantothenate (Pan), the first step in CoA biosynthesis. In Ruegeria pomeroyi (strain ATCC 700808 / DSM 15171 / DSS-3) (Silicibacter pomeroyi), this protein is Type III pantothenate kinase.